We begin with the raw amino-acid sequence, 352 residues long: Serine protease 55 (352 aa).

Positions M1–L18 are cleaved as a signal peptide. Positions I68–Q300 constitute a Peptidase S1 domain. C93 and C109 form a disulfide bridge. Residues H108 and D156 each act as charge relay system in the active site. Cystine bridges form between C189/C256, C222/C235, and C246/C276. The N-linked (GlcNAc...) asparagine glycan is linked to N240. The Charge relay system role is filled by S250. The tract at residues A308–P330 is disordered. Residues P319–P330 show a composition bias toward low complexity. S325 carries GPI-anchor amidated serine lipidation. A propeptide spans G326–Y352 (removed in mature form).

The protein belongs to the peptidase S1 family. In terms of tissue distribution, only detected in testis. Expressed in spermatogonia, spermatocytes, spermatids, Leydig and Sertoli cells. Expressed in prostate cancer and ovarian cancer (at protein level).

It localises to the cell membrane. The protein resides in the cytoplasm. It is found in the cytosol. Functionally, probable serine protease, which plays a crucial role in the fertility of male mice including sperm migration and sperm-egg interaction. This chain is Serine protease 55 (PRSS55), found in Homo sapiens (Human).